We begin with the raw amino-acid sequence, 568 residues long: Glucose-6-phosphate isomerase, cytosolic (568 aa).

Catalysis depends on E360, which acts as the Proton donor. Catalysis depends on residues H391 and K516.

Belongs to the GPI family. As to quaternary structure, homodimer.

The protein resides in the cytoplasm. The catalysed reaction is alpha-D-glucose 6-phosphate = beta-D-fructose 6-phosphate. The protein operates within carbohydrate degradation; glycolysis; D-glyceraldehyde 3-phosphate and glycerone phosphate from D-glucose: step 2/4. The sequence is that of Glucose-6-phosphate isomerase, cytosolic (PGIC) from Oenothera sinuata var. hirsuta (Mexican evening primrose).